A 289-amino-acid chain; its full sequence is Iron-sulfur cluster carrier protein (289 aa).

Low complexity predominate over residues Met-1–Cys-18. The tract at residues Met-1–Asp-20 is disordered. Gly-48–Ser-55 serves as a coordination point for ATP.

Belongs to the Mrp/NBP35 ATP-binding proteins family. Homodimer.

In terms of biological role, binds and transfers iron-sulfur (Fe-S) clusters to target apoproteins. Can hydrolyze ATP. This Methanococcus maripaludis (strain DSM 14266 / JCM 13030 / NBRC 101832 / S2 / LL) protein is Iron-sulfur cluster carrier protein.